We begin with the raw amino-acid sequence, 491 residues long: [Pyruvate dehydrogenase (acetyl-transferring)] kinase 2, mitochondrial (491 aa).

Residues 153-480 (PTIRTLEDAS…DVVLKLGNLM (328 aa)) enclose the Histidine kinase domain. ATP contacts are provided by residues 300-307 (EILRNTYE), D341, 359-360 (SK), and 383-446 (DEVH…GIGL).

The protein belongs to the PDK/BCKDK protein kinase family. Interacts with PKP1.

Its subcellular location is the mitochondrion matrix. The enzyme catalyses L-seryl-[pyruvate dehydrogenase E1 alpha subunit] + ATP = O-phospho-L-seryl-[pyruvate dehydrogenase E1 alpha subunit] + ADP + H(+). In terms of biological role, inhibits the mitochondrial pyruvate dehydrogenase complex by phosphorylation of the E1 alpha subunit (PDA1), thus contributing to the regulation of glucose metabolism. This is [Pyruvate dehydrogenase (acetyl-transferring)] kinase 2, mitochondrial from Saccharomyces cerevisiae (strain ATCC 204508 / S288c) (Baker's yeast).